We begin with the raw amino-acid sequence, 37 residues long: Large ribosomal subunit protein bL36 (37 aa).

The protein belongs to the bacterial ribosomal protein bL36 family.

The chain is Large ribosomal subunit protein bL36 from Photobacterium profundum (strain SS9).